Consider the following 591-residue polypeptide: PE-PGRS family protein PE_PGRS5 (591 aa).

Residues 1–93 (MSFVIAQPEM…AGAYASAEAA (93 aa)) enclose the PE domain. The tract at residues 94–591 (NAGPNMLAAV…GGKGNNGNPG (498 aa)) is PGRS. 6 stretches are compositionally biased toward gly residues: residues 303 to 324 (GAGG…GNGG), 336 to 363 (ASGG…GHVS), 371 to 412 (GAGG…GDGG), 477 to 491 (SEAG…GGDG), 539 to 567 (AGTG…GVNG), and 579 to 591 (GATG…GNPG). Disordered stretches follow at residues 303 to 412 (GAGG…GDGG), 468 to 491 (GSVN…GGDG), and 539 to 591 (AGTG…GNPG).

Belongs to the mycobacterial PE family. PGRS subfamily. As to quaternary structure, interacts with human TLR4.

It localises to the host endoplasmic reticulum. Functionally, involved in endoplasmic reticulum (ER) stress-mediated apoptosis through human Toll-like receptor 4 (TLR4) signaling pathway. Localizes to the host ER, leading to ER stress, disruption of intracellular Ca(2+) homeostasis and increase of nitric oxide (NO) and reactive oxygen species (ROS) levels. Stress response results in caspase-8 activation and apoptosis of macrophage cells. Apoptosis may lead to dissemination of the bacteria, thereby spreading the disease. The polypeptide is PE-PGRS family protein PE_PGRS5 (Mycobacterium tuberculosis (strain ATCC 25618 / H37Rv)).